The primary structure comprises 162 residues: Interleukin-15 (162 aa).

An N-terminal signal peptide occupies residues 1–29 (MRISKPHLRSISIQCYLCLLLKSHFLTEA). Residues 30–48 (GIHVFILGCFSAGLPKTEA) constitute a propeptide that is removed on maturation. 2 disulfide bridges follow: Cys83/Cys133 and Cys90/Cys136. An N-linked (GlcNAc...) asparagine glycan is attached at Asn127.

Belongs to the IL-15/IL-21 family.

It is found in the secreted. Cytokine that plays a major role in the development of inflammatory and protective immune responses to microbial invaders and parasites by modulating immune cells of both the innate and adaptive immune systems. Stimulates the proliferation of natural killer cells, T-cells and B-cells and promotes the secretion of several cytokines. In monocytes, induces the production of IL8 and monocyte chemotactic protein 1/CCL2, two chemokines that attract neutrophils and monocytes respectively to sites of infection. Unlike most cytokines, which are secreted in soluble form, IL15 is expressed in association with its high affinity IL15RA on the surface of IL15-producing cells and delivers signals to target cells that express IL2RB and IL2RG receptor subunits. Binding to its receptor triggers the phosphorylation of JAK1 and JAK3 and the recruitment and subsequent phosphorylation of signal transducer and activator of transcription-3/STAT3 and STAT5. In mast cells, induces the rapid tyrosine phosphorylation of STAT6 and thereby controls mast cell survival and release of cytokines such as IL4. The chain is Interleukin-15 (IL15) from Chlorocebus aethiops (Green monkey).